Consider the following 424-residue polypeptide: Serine hydroxymethyltransferase (424 aa).

(6S)-5,6,7,8-tetrahydrofolate-binding positions include Leu118 and 122 to 124 (GHL). Lys227 carries the post-translational modification N6-(pyridoxal phosphate)lysine. A (6S)-5,6,7,8-tetrahydrofolate-binding site is contributed by 351–353 (SPF).

Belongs to the SHMT family. As to quaternary structure, homodimer. The cofactor is pyridoxal 5'-phosphate.

The protein resides in the cytoplasm. The enzyme catalyses (6R)-5,10-methylene-5,6,7,8-tetrahydrofolate + glycine + H2O = (6S)-5,6,7,8-tetrahydrofolate + L-serine. Its pathway is one-carbon metabolism; tetrahydrofolate interconversion. It participates in amino-acid biosynthesis; glycine biosynthesis; glycine from L-serine: step 1/1. In terms of biological role, catalyzes the reversible interconversion of serine and glycine with tetrahydrofolate (THF) serving as the one-carbon carrier. This reaction serves as the major source of one-carbon groups required for the biosynthesis of purines, thymidylate, methionine, and other important biomolecules. Also exhibits THF-independent aldolase activity toward beta-hydroxyamino acids, producing glycine and aldehydes, via a retro-aldol mechanism. The polypeptide is Serine hydroxymethyltransferase (Pseudothermotoga lettingae (strain ATCC BAA-301 / DSM 14385 / NBRC 107922 / TMO) (Thermotoga lettingae)).